The following is an 88-amino-acid chain: Large ribosomal subunit protein bL27 (88 aa).

Positions 1-21 (MAHKKGASSSRNGRDSNAKRL) are disordered.

It belongs to the bacterial ribosomal protein bL27 family.

The protein is Large ribosomal subunit protein bL27 of Thermobifida fusca (strain YX).